Reading from the N-terminus, the 363-residue chain is 3-isopropylmalate dehydrogenase (363 aa).

79–92 is an NAD(+) binding site; it reads GPKWEHLPPNDQPE. Positions 100, 110, 139, and 228 each coordinate substrate. Residues D228, D252, and D256 each contribute to the Mg(2+) site. Residue 286–298 coordinates NAD(+); that stretch reads GSAPDIAGKNIAN.

Belongs to the isocitrate and isopropylmalate dehydrogenases family. LeuB type 1 subfamily. In terms of assembly, homodimer. The cofactor is Mg(2+). Requires Mn(2+) as cofactor.

The protein localises to the cytoplasm. It catalyses the reaction (2R,3S)-3-isopropylmalate + NAD(+) = 4-methyl-2-oxopentanoate + CO2 + NADH. Its pathway is amino-acid biosynthesis; L-leucine biosynthesis; L-leucine from 3-methyl-2-oxobutanoate: step 3/4. Its function is as follows. Catalyzes the oxidation of 3-carboxy-2-hydroxy-4-methylpentanoate (3-isopropylmalate) to 3-carboxy-4-methyl-2-oxopentanoate. The product decarboxylates to 4-methyl-2 oxopentanoate. This Vibrio parahaemolyticus serotype O3:K6 (strain RIMD 2210633) protein is 3-isopropylmalate dehydrogenase.